The chain runs to 222 residues: Translation initiation factor 6 (222 aa).

It belongs to the eIF-6 family.

Its function is as follows. Binds to the 50S ribosomal subunit and prevents its association with the 30S ribosomal subunit to form the 70S initiation complex. This Methanocorpusculum labreanum (strain ATCC 43576 / DSM 4855 / Z) protein is Translation initiation factor 6.